Here is a 414-residue protein sequence, read N- to C-terminus: Enterobactin exporter EntS (414 aa).

The Cytoplasmic segment spans residues 1 to 21 (MNRQSWLLNLSLLKTHPAFRA). Residues 22-42 (VFLARFISIVSLGLLGVAVPV) traverse the membrane as a helical segment. The Periplasmic segment spans residues 43-55 (QIQMMTHSTWQVG). The chain crosses the membrane as a helical span at residues 56-76 (LSVTLTGGAMFIGLMVGGVLA). At 77-83 (DRYERKK) the chain is on the cytoplasmic side. A helical transmembrane segment spans residues 84–104 (VILLARGTCGIGFIGLCVNAL). At 105–109 (LPEPS) the chain is on the periplasmic side. Residues 110 to 130 (LLAIYLLGLWDGFFASLGVTA) form a helical membrane-spanning segment. The Cytoplasmic portion of the chain corresponds to 131 to 156 (LLAATPALVGRENLMQAGAITMLTVR). The helical transmembrane segment at 157–177 (LGSVISPMLGGILLASGGVAW) threads the bilayer. Residue asparagine 178 is a topological domain, periplasmic. A helical membrane pass occupies residues 179–199 (YGLAAAGTFITLLPLLTLPRL). The Cytoplasmic portion of the chain corresponds to 200–218 (PVPPQPRENPFIALLAAFR). A helical transmembrane segment spans residues 219–239 (FLLASPLIGGIALLGGLVTMA). Residues 240–256 (SAVRVLYPALAMSWQMS) lie on the Periplasmic side of the membrane. A helical transmembrane segment spans residues 257-277 (AAQIGLLYAAIPLGAAIGALT). Over 278–287 (SGQLAHSVRP) the chain is Cytoplasmic. Residues 288–307 (GLIMLVSTVGSFLAVGLFAI) traverse the membrane as a helical segment. The Periplasmic segment spans residues 308 to 313 (MPIWIA). A helical transmembrane segment spans residues 314 to 336 (GVICLALFGWLSAISSLLQYTLL). At 337 to 356 (QTQTPENMLGRMNGLWTAQN) the chain is on the cytoplasmic side. Residues 357–377 (VTGDAIGAALLGGLGAMMTPV) traverse the membrane as a helical segment. A topological domain (periplasmic) is located at residue alanine 378. A helical transmembrane segment spans residues 379–399 (SASVSGFGLVIIGLLLLLVLG). Over 400 to 414 (ELRRFRQTPPVSDAG) the chain is Cytoplasmic.

This sequence belongs to the major facilitator superfamily. EntS (TC 2.A.1.38) family.

Its subcellular location is the cell inner membrane. Its function is as follows. Component of an export pathway for enterobactin. The polypeptide is Enterobactin exporter EntS (Salmonella typhi).